A 189-amino-acid chain; its full sequence is Glucose-6-phosphate isomerase (189 aa).

The Fe cation site is built by His-88, His-90, Glu-97, and His-136.

This sequence belongs to the archaeal-type GPI family. As to quaternary structure, homodimer. Fe cation serves as cofactor.

It is found in the cytoplasm. The enzyme catalyses alpha-D-glucose 6-phosphate = beta-D-fructose 6-phosphate. Its pathway is carbohydrate degradation; glycolysis; D-glyceraldehyde 3-phosphate and glycerone phosphate from D-glucose: step 2/4. The chain is Glucose-6-phosphate isomerase (pgiA) from Pyrococcus horikoshii (strain ATCC 700860 / DSM 12428 / JCM 9974 / NBRC 100139 / OT-3).